We begin with the raw amino-acid sequence, 201 residues long: Recombination protein RecR (201 aa).

The segment at 60 to 75 adopts a C4-type zinc-finger fold; sequence CSTCGNVDTADPCMIC. In terms of domain architecture, Toprim spans 83–178; that stretch reads GTIIVVEDVS…KVTRLAHGVP (96 aa).

Belongs to the RecR family.

Its function is as follows. May play a role in DNA repair. It seems to be involved in an RecBC-independent recombinational process of DNA repair. It may act with RecF and RecO. The protein is Recombination protein RecR of Mesorhizobium japonicum (strain LMG 29417 / CECT 9101 / MAFF 303099) (Mesorhizobium loti (strain MAFF 303099)).